Reading from the N-terminus, the 658-residue chain is UvrABC system protein B (658 aa).

The Helicase ATP-binding domain occupies 25 to 414; sequence KSLKNNNHYQ…LSKKNVAEQI (390 aa). 38–45 serves as a coordination point for ATP; the sequence is GVTGSGKT. A Beta-hairpin motif is present at residues 91–114; sequence HFDYYQPESYIPRRDLFIEKDSSI. One can recognise a Helicase C-terminal domain in the interval 433–607; that stretch reads QVQDLFDEIK…ELKLRDDEIR (175 aa). In terms of domain architecture, UVR spans 623–658; sequence EKIIKELDKKMRECTKNLDFEEAMRLRDEIAQLRTL.

This sequence belongs to the UvrB family. As to quaternary structure, forms a heterotetramer with UvrA during the search for lesions. Interacts with UvrC in an incision complex.

The protein localises to the cytoplasm. In terms of biological role, the UvrABC repair system catalyzes the recognition and processing of DNA lesions. A damage recognition complex composed of 2 UvrA and 2 UvrB subunits scans DNA for abnormalities. Upon binding of the UvrA(2)B(2) complex to a putative damaged site, the DNA wraps around one UvrB monomer. DNA wrap is dependent on ATP binding by UvrB and probably causes local melting of the DNA helix, facilitating insertion of UvrB beta-hairpin between the DNA strands. Then UvrB probes one DNA strand for the presence of a lesion. If a lesion is found the UvrA subunits dissociate and the UvrB-DNA preincision complex is formed. This complex is subsequently bound by UvrC and the second UvrB is released. If no lesion is found, the DNA wraps around the other UvrB subunit that will check the other stand for damage. The protein is UvrABC system protein B of Helicobacter pylori (strain ATCC 700392 / 26695) (Campylobacter pylori).